The following is a 469-amino-acid chain: MSTGKVVQVIGPVIDVEFPLDEELPTINNALKIKKADGTVLVSEVTLELGDGVVRTIAMDGTDGLQRGLDVEDTGDSIKVPVGKETLGRVFNVLGDTIDGGKELGPDIKRDPIHRDPPDYDELNPSTEVLETGIKVIDLLAPYIRGGKIGLFGGAGVGKTVLIQELIHNIAQEHNGISVFTGVGERTREGNDLYFEMKGSGVLERTAMVYGQMNEPPGARMRVALTGLTIAEHFRDVEGQDVLLFIDNIFRFTQAGSEVSALLGRIPSAVGYQPTLATEMGQLQERITSTKKGSVTSIQAVYVPADDYTDPAPATTFAHLDATTNLERALTQQGIYPAVDPLASTSTALDPQIVGEEHYEVATEVQHVLQRYKELQDIISILGMDELSDEEKTVVARARRIQLFLSQDFSVAAQFTGLPGHYVKIEDTISGFKGILDGKYDDLPEEAFRLVGSIDDVVEKAKKISATED.

Position 153–160 (G153–T160) interacts with ATP.

This sequence belongs to the ATPase alpha/beta chains family. In terms of assembly, F-type ATPases have 2 components, CF(1) - the catalytic core - and CF(0) - the membrane proton channel. CF(1) has five subunits: alpha(3), beta(3), gamma(1), delta(1), epsilon(1). CF(0) has three main subunits: a(1), b(2) and c(9-12). The alpha and beta chains form an alternating ring which encloses part of the gamma chain. CF(1) is attached to CF(0) by a central stalk formed by the gamma and epsilon chains, while a peripheral stalk is formed by the delta and b chains.

The protein localises to the cell membrane. The enzyme catalyses ATP + H2O + 4 H(+)(in) = ADP + phosphate + 5 H(+)(out). Its function is as follows. Produces ATP from ADP in the presence of a proton gradient across the membrane. The catalytic sites are hosted primarily by the beta subunits. This chain is ATP synthase subunit beta, found in Pediococcus pentosaceus (strain ATCC 25745 / CCUG 21536 / LMG 10740 / 183-1w).